Here is a 311-residue protein sequence, read N- to C-terminus: Methionyl-tRNA formyltransferase (311 aa).

112–115 lines the (6S)-5,6,7,8-tetrahydrofolate pocket; that stretch reads SLLP.

Belongs to the Fmt family.

It catalyses the reaction L-methionyl-tRNA(fMet) + (6R)-10-formyltetrahydrofolate = N-formyl-L-methionyl-tRNA(fMet) + (6S)-5,6,7,8-tetrahydrofolate + H(+). Functionally, attaches a formyl group to the free amino group of methionyl-tRNA(fMet). The formyl group appears to play a dual role in the initiator identity of N-formylmethionyl-tRNA by promoting its recognition by IF2 and preventing the misappropriation of this tRNA by the elongation apparatus. This is Methionyl-tRNA formyltransferase from Agrobacterium fabrum (strain C58 / ATCC 33970) (Agrobacterium tumefaciens (strain C58)).